We begin with the raw amino-acid sequence, 398 residues long: 1-deoxy-D-xylulose 5-phosphate reductoisomerase (398 aa).

Residues Thr-11, Gly-12, Ser-13, Ile-14, Arg-38, Asn-39, and Asn-125 each contribute to the NADPH site. Lys-126 is a 1-deoxy-D-xylulose 5-phosphate binding site. Glu-127 serves as a coordination point for NADPH. A Mn(2+)-binding site is contributed by Asp-151. The 1-deoxy-D-xylulose 5-phosphate site is built by Ser-152, Glu-153, Ser-179, and His-202. A Mn(2+)-binding site is contributed by Glu-153. Residue Gly-208 participates in NADPH binding. The 1-deoxy-D-xylulose 5-phosphate site is built by Ser-215, Asn-220, Lys-221, and Glu-224. Glu-224 serves as a coordination point for Mn(2+).

It belongs to the DXR family. Mg(2+) is required as a cofactor. The cofactor is Mn(2+).

The enzyme catalyses 2-C-methyl-D-erythritol 4-phosphate + NADP(+) = 1-deoxy-D-xylulose 5-phosphate + NADPH + H(+). It participates in isoprenoid biosynthesis; isopentenyl diphosphate biosynthesis via DXP pathway; isopentenyl diphosphate from 1-deoxy-D-xylulose 5-phosphate: step 1/6. Functionally, catalyzes the NADPH-dependent rearrangement and reduction of 1-deoxy-D-xylulose-5-phosphate (DXP) to 2-C-methyl-D-erythritol 4-phosphate (MEP). The protein is 1-deoxy-D-xylulose 5-phosphate reductoisomerase of Burkholderia pseudomallei (strain 1106a).